The following is a 280-amino-acid chain: L-proline cis-4-hydroxylase (280 aa).

3 residues coordinate Fe cation: histidine 106, aspartate 108, and histidine 154. A 2-oxoglutarate-binding site is contributed by arginine 164.

It belongs to the L-proline cis-4-/cis-3-hydroxylase family. The cofactor is Fe(2+).

The catalysed reaction is L-proline + 2-oxoglutarate + O2 = cis-4-hydroxy-L-proline + succinate + CO2. Inhibited by metal ions such as Co(2+), Zn(2+), Cu(2+) or Ni(2+). Is also inhibited by EDTA or diethylpyrocarbonate (DEPC) in vitro. Unlike the procollagen-proline cis-3- and trans-4-hydroxylases from mammals, does not necessarily require L-ascorbate for activity although it does increase the activity of the enzyme. Functionally, dioxygenase that catalyzes the 2-oxoglutarate-dependent selective hydroxylation of free L-proline to cis-4-hydroxy-L-proline (cis-4-Hyp). The polypeptide is L-proline cis-4-hydroxylase (Mesorhizobium japonicum (strain LMG 29417 / CECT 9101 / MAFF 303099) (Mesorhizobium loti (strain MAFF 303099))).